Consider the following 376-residue polypeptide: WD repeat-containing protein 86 (376 aa).

WD repeat units lie at residues 13–52 (DHRG…CCAL), 55–94 (GHES…QVYR), 95–132 (GHTS…MSRE), 135–188 (GHRN…CHQT), 191–232 (GHTG…RVFR), 234–272 (HRGS…RTFT), 274–310 (HRRN…LRRV), and 313–350 (GHTF…GAPR).

The chain is WD repeat-containing protein 86 (WDR86) from Homo sapiens (Human).